A 127-amino-acid polypeptide reads, in one-letter code: Fluoride-specific ion channel FluC (127 aa).

A run of 3 helical transmembrane segments spans residues 37–57 (TSFVNIAGSLAMGLLAGWLAL), 68–88 (LFLATGVLGGFTTFSAFSLEV), and 102–122 (LYAGVSVLLGVSALFIGLWMA). Positions 76 and 79 each coordinate Na(+).

The protein belongs to the fluoride channel Fluc/FEX (TC 1.A.43) family.

Its subcellular location is the cell inner membrane. It carries out the reaction fluoride(in) = fluoride(out). Na(+) is not transported, but it plays an essential structural role and its presence is essential for fluoride channel function. Its function is as follows. Fluoride-specific ion channel. Important for reducing fluoride concentration in the cell, thus reducing its toxicity. The protein is Fluoride-specific ion channel FluC of Hyphomonas neptunium (strain ATCC 15444).